Consider the following 399-residue polypeptide: Elongation factor Tu (399 aa).

Residues 10-204 (KDHVNIGTIG…AVDDYIDTPE (195 aa)) enclose the tr-type G domain. The interval 19-26 (GHVDHGKT) is G1. Position 19-26 (19-26 (GHVDHGKT)) interacts with GTP. Thr-26 contributes to the Mg(2+) binding site. The interval 60–64 (GITIN) is G2. The tract at residues 81 to 84 (DCPG) is G3. GTP is bound by residues 81 to 85 (DCPGH) and 136 to 139 (NKKD). Residues 136–139 (NKKD) are G4. The tract at residues 174 to 176 (SAL) is G5.

Belongs to the TRAFAC class translation factor GTPase superfamily. Classic translation factor GTPase family. EF-Tu/EF-1A subfamily. In terms of assembly, monomer.

The protein localises to the cytoplasm. It catalyses the reaction GTP + H2O = GDP + phosphate + H(+). GTP hydrolase that promotes the GTP-dependent binding of aminoacyl-tRNA to the A-site of ribosomes during protein biosynthesis. The chain is Elongation factor Tu from Synechocystis sp. (strain ATCC 27184 / PCC 6803 / Kazusa).